Here is a 464-residue protein sequence, read N- to C-terminus: Trigger factor (464 aa).

In terms of domain architecture, PPIase FKBP-type spans 169 to 256; sequence GDVAIVDYRG…MKELKAKELP (88 aa).

The protein belongs to the FKBP-type PPIase family. Tig subfamily.

The protein resides in the cytoplasm. The enzyme catalyses [protein]-peptidylproline (omega=180) = [protein]-peptidylproline (omega=0). In terms of biological role, involved in protein export. Acts as a chaperone by maintaining the newly synthesized protein in an open conformation. Functions as a peptidyl-prolyl cis-trans isomerase. This Microcystis aeruginosa (strain NIES-843 / IAM M-2473) protein is Trigger factor.